A 437-amino-acid chain; its full sequence is 26S proteasome subunit RPT4 (437 aa).

The interval 1-51 (MSEEQDPLLAGLGETSGDNHTQQSHEQQPEQPQETEEHHEEEPSRVDPEQE) is disordered. An N-acetylserine modification is found at Ser-2. Residues 20-32 (HTQQSHEQQPEQP) are compositionally biased toward low complexity. Residues 35–51 (TEEHHEEEPSRVDPEQE) are compositionally biased toward basic and acidic residues. 222–229 (GPPGTGKT) contacts ATP.

It belongs to the AAA ATPase family. Post-translationally, N-acetylated by NAT1.

The 26S proteasome is involved in the ATP-dependent degradation of ubiquitinated proteins. The regulatory (or ATPase) complex confers ATP dependency and substrate specificity to the 26S complex. The polypeptide is 26S proteasome subunit RPT4 (RPT4) (Saccharomyces cerevisiae (strain ATCC 204508 / S288c) (Baker's yeast)).